The primary structure comprises 104 residues: Cell cycle protein GpsB (104 aa).

The stretch at 34–72 forms a coiled coil; that stretch reads LDVVIQDYEVFQKKIERLEQEIHQLRTEAKRAASERQTR. Residues 60–71 are compositionally biased toward basic and acidic residues; the sequence is TEAKRAASERQT. Residues 60–82 form a disordered region; that stretch reads TEAKRAASERQTRHQTSPSVGST. Residues 73–82 are compositionally biased toward polar residues; that stretch reads HQTSPSVGST.

This sequence belongs to the GpsB family. In terms of assembly, forms polymers through the coiled coil domains. Interacts with PBP1, MreC and EzrA.

It localises to the cytoplasm. Divisome component that associates with the complex late in its assembly, after the Z-ring is formed, and is dependent on DivIC and PBP2B for its recruitment to the divisome. Together with EzrA, is a key component of the system that regulates PBP1 localization during cell cycle progression. Its main role could be the removal of PBP1 from the cell pole after pole maturation is completed. Also contributes to the recruitment of PBP1 to the division complex. Not essential for septum formation. The chain is Cell cycle protein GpsB from Halalkalibacterium halodurans (strain ATCC BAA-125 / DSM 18197 / FERM 7344 / JCM 9153 / C-125) (Bacillus halodurans).